The chain runs to 454 residues: uncharacterized protein (454 aa).

Positions 364–405 (CSRPGCDAPAYHSEVHHVTPWTTTHRTDINDLTLACGPDNRL) constitute an HNH domain.

Belongs to the Rv1128c/1148c/1588c/1702c/1945/3466 family.

This is an uncharacterized protein from Mycobacterium tuberculosis (strain ATCC 25618 / H37Rv).